The following is a 331-amino-acid chain: ADP-L-glycero-D-manno-heptose-6-epimerase (331 aa).

Residues 11-12 (FI), 32-33 (DN), K39, K54, 75-79 (EGACS), and N92 each bind NADP(+). Y139 serves as the catalytic Proton acceptor. NADP(+) is bound at residue K143. N168 provides a ligand contact to substrate. Residues V169 and K177 each contribute to the NADP(+) site. K177 functions as the Proton acceptor in the catalytic mechanism. Residues R179, H186, 200–203 (FGEY), R213, and Y292 contribute to the substrate site.

Belongs to the NAD(P)-dependent epimerase/dehydratase family. HldD subfamily. Homopentamer. NADP(+) is required as a cofactor.

The catalysed reaction is ADP-D-glycero-beta-D-manno-heptose = ADP-L-glycero-beta-D-manno-heptose. It functions in the pathway nucleotide-sugar biosynthesis; ADP-L-glycero-beta-D-manno-heptose biosynthesis; ADP-L-glycero-beta-D-manno-heptose from D-glycero-beta-D-manno-heptose 7-phosphate: step 4/4. In terms of biological role, catalyzes the interconversion between ADP-D-glycero-beta-D-manno-heptose and ADP-L-glycero-beta-D-manno-heptose via an epimerization at carbon 6 of the heptose. The sequence is that of ADP-L-glycero-D-manno-heptose-6-epimerase from Cupriavidus necator (strain ATCC 17699 / DSM 428 / KCTC 22496 / NCIMB 10442 / H16 / Stanier 337) (Ralstonia eutropha).